A 336-amino-acid polypeptide reads, in one-letter code: NmrA-like family domain-containing oxidoreductase malD (336 aa).

NADP(+) contacts are provided by residues 12 to 17, 40 to 44, 61 to 62, 82 to 84, Lys-140, and 163 to 166; these read GGTGNQ, RDPTS, DG, TNS, and FMEA.

The protein belongs to the NmrA-type oxidoreductase family.

In terms of biological role, nmrA-like family domain-containing oxidoreductase; part of the gene cluster that mediates the biosynthesis of malbrancheamide, a dichlorinated fungal indole alkaloid that belongs to a family of natural products containing a characteristic bicyclo[2.2.2]diazaoctane core. The first step of malbrancheamide biosynthesis involves coupling of L-proline and L-tryptophan by malG, a bimodular NRPS, to produce L-Pro-L-Trp aldehyde through reductive offloading. This compound undergoes spontaneous cyclization and dehydration to give a dienamine which is reverse prenylated at C-2 by malE. The other prenyltransferase present in the cluster, malB, displays modest activity, suggesting that may be a redundant gene in the pathway. Subsequently, a [4+2] Diels-Alder cyclo-addition catalyzed by the bifunctional enzyme malC forms the characteristic bicyclo[2.2.2]diazaoctane ring of premalbrancheamid. Finally, the flavin-dependent halogenase malA catalyzes the iterative dichlorination of the indole ring of premalbrancheamide to yield C-9 monochlorinated malbrancheamide B, C-8 monochlorinated isomalbrancheamide B, and dichlorinated malbrancheamide. MalA is also able to brominate premalbrancheamide at C-9 to yield malbrancheamide C, and, to a lesser extend, at C-8 to yield isomalbrancheamide C. Finally, malA can brominate C-9 monochlorinated malbrancheamide B at C-8 to yield malbrancheamide D, or C-8 monochlorinated isomalbrancheamide B at C-9 to produce isomalbrancheamide D. This chain is NmrA-like family domain-containing oxidoreductase malD, found in Malbranchea aurantiaca.